A 385-amino-acid polypeptide reads, in one-letter code: Mannitol-1-phosphate 5-dehydrogenase (385 aa).

Residue 3–14 coordinates NAD(+); the sequence is AVHFGAGNIGRG.

Belongs to the mannitol dehydrogenase family.

The enzyme catalyses D-mannitol 1-phosphate + NAD(+) = beta-D-fructose 6-phosphate + NADH + H(+). In Geobacillus thermodenitrificans (strain NG80-2), this protein is Mannitol-1-phosphate 5-dehydrogenase.